A 152-amino-acid chain; its full sequence is Large ribosomal subunit protein bL9 (152 aa).

It belongs to the bacterial ribosomal protein bL9 family.

Its function is as follows. Binds to the 23S rRNA. This is Large ribosomal subunit protein bL9 from Mycobacterium bovis (strain ATCC BAA-935 / AF2122/97).